A 303-amino-acid polypeptide reads, in one-letter code: Ribosomal protein L11 methyltransferase (303 aa).

Residues T144, G165, D187, and N235 each coordinate S-adenosyl-L-methionine.

This sequence belongs to the methyltransferase superfamily. PrmA family.

The protein localises to the cytoplasm. It catalyses the reaction L-lysyl-[protein] + 3 S-adenosyl-L-methionine = N(6),N(6),N(6)-trimethyl-L-lysyl-[protein] + 3 S-adenosyl-L-homocysteine + 3 H(+). Methylates ribosomal protein L11. This Prochlorococcus marinus (strain MIT 9312) protein is Ribosomal protein L11 methyltransferase.